The sequence spans 318 residues: tRNA U34 carboxymethyltransferase (318 aa).

Carboxy-S-adenosyl-L-methionine contacts are provided by Lys88, Trp102, Lys107, Gly126, Met192, Tyr196, and Arg311.

Belongs to the class I-like SAM-binding methyltransferase superfamily. CmoB family. As to quaternary structure, homotetramer.

The catalysed reaction is carboxy-S-adenosyl-L-methionine + 5-hydroxyuridine(34) in tRNA = 5-carboxymethoxyuridine(34) in tRNA + S-adenosyl-L-homocysteine + H(+). Catalyzes carboxymethyl transfer from carboxy-S-adenosyl-L-methionine (Cx-SAM) to 5-hydroxyuridine (ho5U) to form 5-carboxymethoxyuridine (cmo5U) at position 34 in tRNAs. The sequence is that of tRNA U34 carboxymethyltransferase from Pseudomonas fluorescens (strain SBW25).